A 508-amino-acid chain; its full sequence is Maturase K (508 aa).

It belongs to the intron maturase 2 family. MatK subfamily.

The protein localises to the plastid. Its subcellular location is the chloroplast. Its function is as follows. Usually encoded in the trnK tRNA gene intron. Probably assists in splicing its own and other chloroplast group II introns. The protein is Maturase K of Ranunculus lingua (Greater spearwort).